A 191-amino-acid polypeptide reads, in one-letter code: CASP-like protein 2U4 (191 aa).

At 1–25 the chain is on the cytoplasmic side; sequence MGAYDGAEAPRAAPASTAANSRPSR. A helical transmembrane segment spans residues 26–46; the sequence is LLLLHSLLLRLVAVVLSILVI. Residues 47 to 68 lie on the Extracellular side of the membrane; the sequence is AVMVHAKQRVMIFKAEWDNSKA. The helical transmembrane segment at 69 to 89 threads the bilayer; the sequence is FVALVTISAICLGYSFLQFIL. Residues 90 to 114 lie on the Cytoplasmic side of the membrane; sequence SAFHLCSKSWKSPTKCWAWMNFIAD. The helical transmembrane segment at 115 to 135 threads the bilayer; that stretch reads QILTYAMLGAAAAAAELAYIA. Residues 136–157 are Extracellular-facing; sequence KNGSSRAQWQPICSTFNTFCTR. A glycan (N-linked (GlcNAc...) asparagine) is linked at N137. A helical membrane pass occupies residues 158 to 178; the sequence is AGASIILSFIAVLALANSSAI. Residues 179-191 are Cytoplasmic-facing; it reads SAYHLFRRPSSSV.

It belongs to the Casparian strip membrane proteins (CASP) family. In terms of assembly, homodimer and heterodimers.

Its subcellular location is the cell membrane. In Selaginella moellendorffii (Spikemoss), this protein is CASP-like protein 2U4.